The following is a 268-amino-acid chain: 4-pyridoxolactonase (268 aa).

7 residues coordinate Zn(2+): histidine 96, histidine 98, aspartate 100, histidine 101, histidine 185, aspartate 207, and histidine 252. Aspartate 100 serves as the catalytic Proton donor/acceptor.

It belongs to the metallo-beta-lactamase superfamily. As to quaternary structure, homodimer. Zn(2+) is required as a cofactor.

It carries out the reaction 4-pyridoxolactone + H2O = 4-pyridoxate + H(+). It participates in cofactor degradation; B6 vitamer degradation; 4-pyridoxate from pyridoxal: step 2/2. With respect to regulation, inhibited by Hg(2+). In terms of biological role, involved in the degradation of pyridoxine or pyridoxamine (free, phosphate-unbound, forms of vitamin B6). Hydrolyzes 4-pyridoxolactone to 4-pyridoxic acid. Has lower activity toward N-hexanoyl-D,L-homoserine lactone, but is not active toward 5-pyridoxolactone and gamma-butyrolactone. The chain is 4-pyridoxolactonase from Mesorhizobium japonicum (strain LMG 29417 / CECT 9101 / MAFF 303099) (Mesorhizobium loti (strain MAFF 303099)).